Consider the following 358-residue polypeptide: UDP-N-acetylglucosamine--N-acetylmuramyl-(pentapeptide) pyrophosphoryl-undecaprenol N-acetylglucosamine transferase (358 aa).

UDP-N-acetyl-alpha-D-glucosamine is bound by residues 13–15, Asn-125, Arg-161, Ser-189, Ile-244, and Gln-288; that span reads TGG.

It belongs to the glycosyltransferase 28 family. MurG subfamily.

Its subcellular location is the cell membrane. It catalyses the reaction di-trans,octa-cis-undecaprenyl diphospho-N-acetyl-alpha-D-muramoyl-L-alanyl-D-glutamyl-meso-2,6-diaminopimeloyl-D-alanyl-D-alanine + UDP-N-acetyl-alpha-D-glucosamine = di-trans,octa-cis-undecaprenyl diphospho-[N-acetyl-alpha-D-glucosaminyl-(1-&gt;4)]-N-acetyl-alpha-D-muramoyl-L-alanyl-D-glutamyl-meso-2,6-diaminopimeloyl-D-alanyl-D-alanine + UDP + H(+). It participates in cell wall biogenesis; peptidoglycan biosynthesis. Cell wall formation. Catalyzes the transfer of a GlcNAc subunit on undecaprenyl-pyrophosphoryl-MurNAc-pentapeptide (lipid intermediate I) to form undecaprenyl-pyrophosphoryl-MurNAc-(pentapeptide)GlcNAc (lipid intermediate II). This chain is UDP-N-acetylglucosamine--N-acetylmuramyl-(pentapeptide) pyrophosphoryl-undecaprenol N-acetylglucosamine transferase, found in Baumannia cicadellinicola subsp. Homalodisca coagulata.